Reading from the N-terminus, the 950-residue chain is Leucine--tRNA ligase (950 aa).

A 'HIGH' region motif is present at residues 42-52 (PYLNGNLHAGH). A 'KMSKS' region motif is present at residues 629–633 (KMSKS). Lysine 632 is an ATP binding site. A disordered region spans residues 928–950 (NPPYDPKGRAQNAEPGRPAIYIE).

Belongs to the class-I aminoacyl-tRNA synthetase family.

The protein resides in the cytoplasm. It carries out the reaction tRNA(Leu) + L-leucine + ATP = L-leucyl-tRNA(Leu) + AMP + diphosphate. The sequence is that of Leucine--tRNA ligase from Methanothrix thermoacetophila (strain DSM 6194 / JCM 14653 / NBRC 101360 / PT) (Methanosaeta thermophila).